We begin with the raw amino-acid sequence, 162 residues long: Small ribosomal subunit protein uS5 (162 aa).

The S5 DRBM domain maps to 7–70; the sequence is EEKMILIRRT…YARRNMVEVP (64 aa).

Belongs to the universal ribosomal protein uS5 family. Part of the 30S ribosomal subunit. Contacts proteins S4 and S8.

In terms of biological role, with S4 and S12 plays an important role in translational accuracy. Functionally, located at the back of the 30S subunit body where it stabilizes the conformation of the head with respect to the body. This is Small ribosomal subunit protein uS5 (rpsE) from Thermus thermophilus (strain ATCC BAA-163 / DSM 7039 / HB27).